The primary structure comprises 345 residues: Methionine import ATP-binding protein MetN (345 aa).

Positions 2–241 constitute an ABC transporter domain; that stretch reads IKLNNIXKIF…PKTELAQEFI (240 aa). 38–45 is a binding site for ATP; that stretch reads GASGAGKS.

It belongs to the ABC transporter superfamily. Methionine importer (TC 3.A.1.24) family. As to quaternary structure, the complex is composed of two ATP-binding proteins (MetN), two transmembrane proteins (MetI) and a solute-binding protein (MetQ).

Its subcellular location is the cell inner membrane. The catalysed reaction is L-methionine(out) + ATP + H2O = L-methionine(in) + ADP + phosphate + H(+). It carries out the reaction D-methionine(out) + ATP + H2O = D-methionine(in) + ADP + phosphate + H(+). Part of the ABC transporter complex MetNIQ involved in methionine import. Responsible for energy coupling to the transport system. The polypeptide is Methionine import ATP-binding protein MetN (Haemophilus influenzae (strain ATCC 51907 / DSM 11121 / KW20 / Rd)).